We begin with the raw amino-acid sequence, 494 residues long: Myocyte-specific enhancer factor 2A (494 aa).

In terms of domain architecture, MADS-box spans Arg3–Tyr57. The segment at residues Ala58–Glu86 is a DNA-binding region (mef2-type). Position 59 is a phosphoserine; by CK2 (Ser59). Residues Ser98 and Ser108 each carry the phosphoserine modification. Residues Thr171 to Pro181 are compositionally biased toward low complexity. The interval Thr171–Ala218 is disordered. Residue Ser233 is modified to Phosphoserine. The disordered stretch occupies residues Gly238–Lys268. Lys247 is modified (N6-acetyllysine). The residue at position 253 (Ser253) is a Phosphoserine. Positions Met264 to Gly281 are required for interaction with MAPKs. A phosphothreonine; by MAPK7 and MAPK14 mark is found at Thr302 and Thr309. Residue Ser345 is modified to Phosphoserine; by MAPK7. The segment covering Ser380–Ile392 has biased composition (polar residues). The interval Ser380–Thr494 is disordered. Lys393 bears the N6-acetyllysine; alternate mark. A Glycyl lysine isopeptide (Lys-Gly) (interchain with G-Cter in SUMO); alternate cross-link involves residue Lys393. Ser398 bears the Phosphoserine; by CDK5 mark. Thr405 carries the post-translational modification Phosphothreonine. The span at Gln418–Gln432 shows a compositional bias: pro residues. Ser440 is modified (phosphoserine). Residues Ser440 to Asp453 are compositionally biased toward low complexity. 2 stretches are compositionally biased toward basic and acidic residues: residues Gly454–Phe464 and Asn475–Thr494.

In terms of assembly, binds DNA as a homo- or heterodimer. Dimerizes with MEF2D. Interacts with HDAC7. Interacts with PIAS1; the interaction enhances sumoylation. Interacts with HDAC4, HDAC9 and SLC2A4RG. Interacts (via the N-terminal) with MAPK7; the interaction results in the phosphorylation and transcriptional activity of MEF2A. Constitutive phosphorylation on Ser-398 promotes Lys-393 sumoylation thus preventing acetylation at this site. Dephosphorylation on Ser-398 by PPP3CA upon neuron depolarization promotes a switch from sumoylation to acetylation on residue Lys-393 leading to inhibition of dendrite claw differentiation. Phosphorylation on Thr-302 and Thr-309 are the main sites involved in p38 MAPK signaling and activate transcription. Phosphorylated on these sites by MAPK14/p38alpha and MAPK11/p38beta, but not by MAPK13/p38delta nor by MAPK12/p38gamma. Phosphorylation on Ser-398 by CDK5 induced by neurotoxicity inhibits MEF2A transcriptional activation leading to apoptosis of cortical neurons. Phosphorylation on Thr-302, Thr-309 and Ser-345 can be induced by EGF. In terms of processing, sumoylation on Lys-393 is enhanced by PIAS1 and represses transcriptional activity. Phosphorylation on Ser-398 is required for sumoylation. Has no effect on nuclear location nor on DNA binding. Sumoylated with SUMO1 and, to a lesser extent with SUMO2 and SUMO3. PIASx facilitates sumoylation in postsynaptic dendrites in the cerebellar cortex and promotes their morphogenesis. Post-translationally, acetylation on Lys-393 activates transcriptional activity. Acetylated by p300 on several sites in diffentiating myocytes. Acetylation on Lys-4 increases DNA binding and transactivation. Hyperacetylation by p300 leads to enhanced cardiac myocyte growth and heart failure. Proteolytically cleaved in cerebellar granule neurons on several sites by caspase 3 and caspase 7 following neurotoxicity. Preferentially cleaves the CDK5-mediated hyperphosphorylated form which leads to neuron apoptosis and transcriptional inactivation.

The protein resides in the nucleus. Functionally, transcriptional activator which binds specifically to the MEF2 element, 5'-YTA[AT](4)TAR-3', found in numerous muscle-specific genes. Also involved in the activation of numerous growth factor- and stress-induced genes. Mediates cellular functions not only in skeletal and cardiac muscle development, but also in neuronal differentiation and survival. Plays diverse roles in the control of cell growth, survival and apoptosis via p38 MAPK signaling in muscle-specific and/or growth factor-related transcription. In cerebellar granule neurons, phosphorylated and sumoylated MEF2A represses transcription of NUR77 promoting synaptic differentiation. Associates with chromatin to the ZNF16 promoter. This chain is Myocyte-specific enhancer factor 2A (MEF2A), found in Pongo abelii (Sumatran orangutan).